Reading from the N-terminus, the 332-residue chain is GTP 3',8-cyclase (332 aa).

The region spanning 9-220 is the Radical SAM core domain; sequence GYNRRVDYLR…TQVRERIAER (212 aa). A GTP-binding site is contributed by Arg-18. 2 residues coordinate [4Fe-4S] cluster: Cys-25 and Cys-29. Tyr-31 contributes to the S-adenosyl-L-methionine binding site. Cys-32 is a [4Fe-4S] cluster binding site. Position 67 (Arg-67) interacts with GTP. Gly-71 provides a ligand contact to S-adenosyl-L-methionine. Thr-98 is a GTP binding site. Residue Ser-122 participates in S-adenosyl-L-methionine binding. A GTP-binding site is contributed by Lys-159. Met-193 lines the S-adenosyl-L-methionine pocket. Residues Cys-258 and Cys-261 each contribute to the [4Fe-4S] cluster site. 263-265 is a GTP binding site; that stretch reads RVR. Position 275 (Cys-275) interacts with [4Fe-4S] cluster.

This sequence belongs to the radical SAM superfamily. MoaA family. As to quaternary structure, monomer and homodimer. [4Fe-4S] cluster serves as cofactor.

The catalysed reaction is GTP + AH2 + S-adenosyl-L-methionine = (8S)-3',8-cyclo-7,8-dihydroguanosine 5'-triphosphate + 5'-deoxyadenosine + L-methionine + A + H(+). It functions in the pathway cofactor biosynthesis; molybdopterin biosynthesis. Catalyzes the cyclization of GTP to (8S)-3',8-cyclo-7,8-dihydroguanosine 5'-triphosphate. This chain is GTP 3',8-cyclase, found in Pseudomonas fluorescens (strain Pf0-1).